A 122-amino-acid polypeptide reads, in one-letter code: uncharacterized protein (122 aa).

Positions 1-15 (MAEPGGRGDYHKDGR) are enriched in basic and acidic residues. Positions 1 to 26 (MAEPGGRGDYHKDGRPPSLSRSPLFT) are disordered.

This is an uncharacterized protein from Macaca fascicularis (Crab-eating macaque).